Here is a 312-residue protein sequence, read N- to C-terminus: NAD(P)(+)--arginine ADP-ribosyltransferase 2 (312 aa).

Residues 1 to 20 (MELLALRWVLLAGTLLSTSA) form the signal peptide. A propeptide spanning residues 21–31 (ASSALQEGDLG) is cleaved from the precursor. Cystine bridges form between cysteine 51/cysteine 260 and cysteine 159/cysteine 208. The TR mART core domain occupies 71-256 (YAYAVGWRKA…IYLRSKGKMS (186 aa)). Residues tyrosine 108, arginine 164, and glutamine 183 each coordinate NAD(+). Arginine 164 is a catalytic residue. Residue serine 186 is part of the active site. Residue serine 217 coordinates NAD(+). The active site involves glutamate 224. The propeptide occupies 267-312 (GGQWGRGHQEVGLGLSPGLALPVLPCSNCSCWGSGHRAGDPIPAAV).

It belongs to the Arg-specific ADP-ribosyltransferase family.

It localises to the secreted. Its subcellular location is the extracellular space. The enzyme catalyses L-arginyl-[protein] + NAD(+) = N(omega)-(ADP-D-ribosyl)-L-arginyl-[protein] + nicotinamide + H(+). The chain is NAD(P)(+)--arginine ADP-ribosyltransferase 2 from Gallus gallus (Chicken).